The following is a 199-amino-acid chain: Nitrile hydratase subunit alpha (199 aa).

Positions 102, 105, 106, and 107 each coordinate Fe(3+). C105 is modified (cysteine sulfinic acid (-SO2H)). Position 107 is a cysteine sulfenic acid (-SOH) (C107).

It belongs to the nitrile hydratase subunit alpha family. In terms of assembly, heterodimer of an alpha and a beta chain. Fe(3+) serves as cofactor. Post-translationally, oxidation on Cys-105 is essential for the activity. Oxidation on Cys-107 stabilizes the Fe-NO ligand coordinated in the inactive form.

The catalysed reaction is an aliphatic primary amide = an aliphatic nitrile + H2O. Inactivated by oxidation of Cys-107 to a sulfenic acid. Functionally, NHase catalyzes the hydration of various nitrile compounds to the corresponding amides. Industrial production of acrylamide is now being developed using some of the enzymes of this class. The protein is Nitrile hydratase subunit alpha (nthA) of Rhodococcus sp.